The following is a 334-amino-acid chain: Beta-glucanase (334 aa).

Positions 1 to 27 (MKNRVISLLMASLLLVLSVIVAPFYKA) are cleaved as a signal peptide. Residues 28-248 (EAATVVNTPF…YVKYYPNGVP (221 aa)) enclose the GH16 domain. E136 acts as the Nucleophile in catalysis. The active-site Proton donor is the E140. Residues 246-265 (GVPQDNPTPTPTIAPSTPTN) form a disordered region. The Dockerin domain occupies 267 to 334 (NLPLKGDVNG…RYLIRAIPSL (68 aa)).

The protein belongs to the glycosyl hydrolase 16 family.

It catalyses the reaction Hydrolysis of (1-&gt;4)-beta-D-glucosidic linkages in beta-D-glucans containing (1-&gt;3)- and (1-&gt;4)-bonds.. This is Beta-glucanase (licB) from Acetivibrio thermocellus (Hungateiclostridium thermocellum).